The chain runs to 485 residues: E3 ubiquitin-protein ligase TRIM68 (485 aa).

The segment at 16 to 61 (CPICMTFLREPVSISCGHTFCHSCLSGLWKLPGESQNLSYTCPLCR) adopts an RING-type zinc-finger fold. The B box-type zinc-finger motif lies at 93-134 (LKTDVCDLHKEQLTMFCKEDDMVTCEACKQSPEHEAHSVVPI). Residues Cys98, His101, Cys120, and His126 each contribute to the Zn(2+) site. Residues 144 to 226 (KLQQALEHLR…EQEKGETASK (83 aa)) adopt a coiled-coil conformation. One can recognise a B30.2/SPRY domain in the interval 285–483 (LKTDCRVLGL…TPLTICTLGG (199 aa)).

It belongs to the TRIM/RBCC family. In terms of assembly, interacts with AR/androgen receptor (via ligand-binding domain). Interacts with KAT5/TIP60. Post-translationally, auto-ubiquitinated.

It localises to the cytoplasm. It is found in the perinuclear region. The protein localises to the nucleus. It catalyses the reaction S-ubiquitinyl-[E2 ubiquitin-conjugating enzyme]-L-cysteine + [acceptor protein]-L-lysine = [E2 ubiquitin-conjugating enzyme]-L-cysteine + N(6)-ubiquitinyl-[acceptor protein]-L-lysine.. It functions in the pathway protein modification; protein ubiquitination. Its function is as follows. Functions as a ubiquitin E3 ligase. Acts as a coactivator of androgen receptor (AR) depending on its ubiquitin ligase activity. In Mus musculus (Mouse), this protein is E3 ubiquitin-protein ligase TRIM68 (Trim68).